The primary structure comprises 183 residues: uncharacterized protein (183 aa).

A helical membrane pass occupies residues 7–23 (LFFTALCFGLTGCIAPP).

It localises to the membrane. This is an uncharacterized protein from Haemophilus influenzae (strain ATCC 51907 / DSM 11121 / KW20 / Rd).